The following is a 125-amino-acid chain: Probable mercury resistance operon repressor (125 aa).

The 95-residue stretch at 15–109 (VPCTHPDTTA…LARCLAADNA (95 aa)) folds into the HTH arsR-type domain. Residues 49–68 (SAECVEHAGISQPRVSVHLS) constitute a DNA-binding region (H-T-H motif). The Hg(2+) site is built by Cys69, Cys73, and Cys114.

Its function is as follows. Negatively regulates the mercuric reductase merA and the organolyase merB in the absence of mercuric ions. This Streptomyces lividans protein is Probable mercury resistance operon repressor (merR).